Here is a 741-residue protein sequence, read N- to C-terminus: Beta-galactosidase 10 (741 aa).

A signal peptide spans 1 to 29; the sequence is MNRVTTESIASTAILVVMVFLFSWRSIEA. N-linked (GlcNAc...) asparagine glycosylation is present at Asn31. Glu188 functions as the Proton donor in the catalytic mechanism. The Nucleophile role is filled by Glu257. Residues Asn358, Asn396, Asn469, Asn525, and Asn583 are each glycosylated (N-linked (GlcNAc...) asparagine).

Belongs to the glycosyl hydrolase 35 family. In terms of tissue distribution, ubiquitous.

It is found in the secreted. The protein resides in the extracellular space. Its subcellular location is the apoplast. It carries out the reaction Hydrolysis of terminal non-reducing beta-D-galactose residues in beta-D-galactosides.. The protein is Beta-galactosidase 10 (BGAL10) of Arabidopsis thaliana (Mouse-ear cress).